We begin with the raw amino-acid sequence, 459 residues long: MKISVRNLEPTKVKLTVTVEPEELNPYLDAARKEIAKQVNVPGFRKGHVPGKIIDQRIGFAAVAGEAVNDAVPELYSKALDEKKIRPMAQPEFDVQDVPQSANDETKLKFTATVERRPDIELPEIDGLEIAISKPEVKDEDVDKRLETLRQRFGTLVGVDRPAAKGDFANIDLTAEIDGETVDSQEGVSYELGSNTMLDGLDEALDGLSAGEETTFEGTLEAGEHEGQKATVKVKVNSVKAEELPELDDEFASEASEFDTLDELKADIRKAAAQDAEGRQATEARDAFIAKLQEGLEIPVPKGVKANMVEEQLKGLTPDPEKATKEQKAQAEETVEKDLRDQMVLDALAEKLDVQVSQSDVFNFLASIAQQYGMDPNNFIQAIIKNGQLGSAVQEVARSKGLLAGMRAVKFTADGEVVDLSGFLGEAAEDEESESVEAASAAAAVADELSAKDDAKDAE.

The PPIase FKBP-type domain occupies 166–245 (GDFANIDLTA…VNSVKAEELP (80 aa)).

This sequence belongs to the FKBP-type PPIase family. Tig subfamily.

Its subcellular location is the cytoplasm. It carries out the reaction [protein]-peptidylproline (omega=180) = [protein]-peptidylproline (omega=0). Its function is as follows. Involved in protein export. Acts as a chaperone by maintaining the newly synthesized protein in an open conformation. Functions as a peptidyl-prolyl cis-trans isomerase. The protein is Trigger factor of Bifidobacterium longum subsp. infantis (strain ATCC 15697 / DSM 20088 / JCM 1222 / NCTC 11817 / S12).